The following is a 311-amino-acid chain: Malate dehydrogenase (311 aa).

10 to 15 contacts NAD(+); that stretch reads GAGHTG. Arg-85 and Arg-91 together coordinate substrate. Residues Asn-98 and 121–123 each bind NAD(+); that span reads LTN. Residues Asn-123 and Arg-154 each coordinate substrate. Catalysis depends on His-178, which acts as the Proton acceptor.

The protein belongs to the LDH/MDH superfamily. MDH type 3 family.

It carries out the reaction (S)-malate + NAD(+) = oxaloacetate + NADH + H(+). In terms of biological role, catalyzes the reversible oxidation of malate to oxaloacetate. This is Malate dehydrogenase from Staphylococcus carnosus (strain TM300).